A 236-amino-acid polypeptide reads, in one-letter code: Uridylate kinase (236 aa).

11–14 (KFSG) is a binding site for ATP. Residue G53 participates in UMP binding. ATP contacts are provided by G54 and R58. Residues D73 and 134–141 (TGSPFFTT) each bind UMP. ATP is bound by residues T161, Y167, and D170.

It belongs to the UMP kinase family. In terms of assembly, homohexamer.

Its subcellular location is the cytoplasm. The enzyme catalyses UMP + ATP = UDP + ADP. The protein operates within pyrimidine metabolism; CTP biosynthesis via de novo pathway; UDP from UMP (UMPK route): step 1/1. Its activity is regulated as follows. Inhibited by UTP. In terms of biological role, catalyzes the reversible phosphorylation of UMP to UDP. This chain is Uridylate kinase, found in Hydrogenovibrio crunogenus (strain DSM 25203 / XCL-2) (Thiomicrospira crunogena).